The sequence spans 330 residues: Phosphate acyltransferase (330 aa).

Belongs to the PlsX family. As to quaternary structure, homodimer. Probably interacts with PlsY.

Its subcellular location is the cytoplasm. The enzyme catalyses a fatty acyl-[ACP] + phosphate = an acyl phosphate + holo-[ACP]. Its pathway is lipid metabolism; phospholipid metabolism. Catalyzes the reversible formation of acyl-phosphate (acyl-PO(4)) from acyl-[acyl-carrier-protein] (acyl-ACP). This enzyme utilizes acyl-ACP as fatty acyl donor, but not acyl-CoA. The sequence is that of Phosphate acyltransferase from Lactobacillus delbrueckii subsp. bulgaricus (strain ATCC BAA-365 / Lb-18).